A 555-amino-acid chain; its full sequence is MGDAAVPAMVVEEEEQEHVFRSRFPPVAVPDGVTVPEFVLDGAEAYADRVALVEAAAGGRSYTYGEVARDTARFARALRSVGVRKGHVVVVALPNLAVYPVVSLGIMSAGAVFSGVNPRALAAEIKKQVEDSEAKLVVANEVAFDKVKDAGVPVIGVGDRERMPGAISWDGLLAAADRTGAGVVPVDAAQQSDLCALPYSSGTTGVSKGVMLSHRNLVSNLCSSMFAVAPETAGQVVTLGLMPFFHIYGITGICCATLRHKGTVVVMDRFDLRTFLRALVDHRVMFAPLVPPVMLAMVKSPVADEFDLSDLALKSVMTAAAPLAPDLLAAFQRKFPGVQVEEAYGLTEHSCITLTHAAGDGHGHVAKKSSVGFILPNLEVKFVDPDTGRSLPANTPGELCVRSQSVMQGYYKRKEETERTVDGKGWLHTGDVGYIDGDGDVFIVDRIKELIKYKGFQVAPAELEAVLLSHPSVEDAAVFGVPDEEAGEVPVACVVRRHGAEEGEEEIVAYVAERVASYKRVRVLHIVDAIPKSVSGKILRRQLRDEFIKRMKPSA.

ATP is bound by residues S200, S201, G202, T203, T204, and K208. Y248 lines the (E)-4-coumaroyl-AMP pocket. A CoA-binding site is contributed by R269. Residues 271–342 (DLRTFLRALV…RKFPGVQVEE (72 aa)) are SBD1. A320 serves as a coordination point for (E)-4-coumaroyl-AMP. ATP is bound by residues E342, A343, T347, D431, and R446. 2 residues coordinate (E)-4-coumaroyl-AMP: A343 and T347. Residues 343-410 (AYGLTEHSCI…VRSQSVMQGY (68 aa)) form an SBD2 region. (E)-4-coumaroyl-AMP contacts are provided by K448 and K452. CoA contacts are provided by K454 and G455. Position 537 (K537) interacts with ATP.

It belongs to the ATP-dependent AMP-binding enzyme family. In terms of assembly, interacts with STS1. Mg(2+) serves as cofactor.

It carries out the reaction (E)-4-coumarate + ATP + CoA = (E)-4-coumaroyl-CoA + AMP + diphosphate. The catalysed reaction is (E)-4-coumarate + ATP + H(+) = (E)-4-coumaroyl-AMP + diphosphate. It catalyses the reaction (E)-4-coumaroyl-AMP + CoA = (E)-4-coumaroyl-CoA + AMP + H(+). Carboxylate--CoA ligase that may use 4-coumarate as substrate. Follows a two-step reaction mechanism, wherein the carboxylate substrate first undergoes adenylation by ATP, followed by a thioesterification in the presence of CoA to yield the final CoA thioester. The polypeptide is 4-coumarate--CoA ligase-like 9 (4CLL9) (Oryza sativa subsp. japonica (Rice)).